Reading from the N-terminus, the 101-residue chain is CLAVATA3/ESR (CLE)-related protein 18 (101 aa).

Residues 1 to 25 (MHLLKGGVVLIITLILFLITSSIVA) form the signal peptide. Residues 37 to 58 (RQIPTGPDPLHNPPQPSPKHHH) are disordered. Hydroxyproline is present on residues P40 and P43. The segment covering 42-53 (GPDPLHNPPQPS) has biased composition (pro residues). The O-linked (Ara...) hydroxyproline glycan is linked to P43. At Y76 the chain carries Sulfotyrosine. At P84 the chain carries Hydroxyproline.

The protein belongs to the CLV3/ESR signal peptide family. In terms of processing, the tyrosine sulfation is critical for the function of the peptide. The O-glycosylation (arabinosylation) of the hydroxyproline Pro-43 enhances binding affinity of the CLE18p peptide for its receptor. Expressed in roots, leaves, siliques and seedlings.

It localises to the secreted. The protein resides in the extracellular space. Its function is as follows. Root growth factor that regulates the pattern of root growth and lateral root development by modulating the length and the number of cortical cells in the root apical meristem (RAM), and the anticlinal asymmetric cell divisions in lateral root initiation cells. Functionally, extracellular signal peptide that regulates cell fate. Represses root apical meristem maintenance. Root growth factor that regulates the pattern of root growth and lateral root development. Regulates the transition of protophloem cells from proliferation to differentiation, thus impinging on postembryonic growth capacity of the root meristem; this signaling pathway requires CRN and CLV2. The protein is CLAVATA3/ESR (CLE)-related protein 18 of Arabidopsis thaliana (Mouse-ear cress).